Here is a 491-residue protein sequence, read N- to C-terminus: Glutathione synthetase GSH2 (491 aa).

Residue Arg-128 coordinates substrate. Glu-146 serves as a coordination point for ATP. Residues Glu-146 and Asn-148 each coordinate Mg(2+). Substrate-binding positions include 150 to 153 (VSVS), 228 to 230 (ERN), Gln-234, and 285 to 288 (RTGY). ATP is bound by residues Lys-324, 382 to 391 (KPQREGGGNN), Tyr-393, 415 to 418 (MELI), and Glu-442. Glu-386 lines the Mg(2+) pocket. Arg-467 contributes to the substrate binding site. Lys-469 and Glu-475 together coordinate ATP. A substrate-binding site is contributed by 478–479 (VA).

It belongs to the eukaryotic GSH synthase family. In terms of assembly, homodimer. Mg(2+) is required as a cofactor.

The enzyme catalyses gamma-L-glutamyl-L-cysteine + glycine + ATP = glutathione + ADP + phosphate + H(+). It functions in the pathway sulfur metabolism; glutathione biosynthesis; glutathione from L-cysteine and L-glutamate: step 2/2. The chain is Glutathione synthetase GSH2 (GSH2) from Saccharomyces cerevisiae (strain ATCC 204508 / S288c) (Baker's yeast).